A 179-amino-acid chain; its full sequence is Large ribosomal subunit protein uL5 (179 aa).

The protein belongs to the universal ribosomal protein uL5 family. In terms of assembly, part of the 50S ribosomal subunit; part of the 5S rRNA/L5/L18/L25 subcomplex. Contacts the 5S rRNA and the P site tRNA. Forms a bridge to the 30S subunit in the 70S ribosome.

In terms of biological role, this is one of the proteins that bind and probably mediate the attachment of the 5S RNA into the large ribosomal subunit, where it forms part of the central protuberance. In the 70S ribosome it contacts protein S13 of the 30S subunit (bridge B1b), connecting the 2 subunits; this bridge is implicated in subunit movement. Contacts the P site tRNA; the 5S rRNA and some of its associated proteins might help stabilize positioning of ribosome-bound tRNAs. The protein is Large ribosomal subunit protein uL5 of Thiobacillus denitrificans (strain ATCC 25259 / T1).